The sequence spans 453 residues: Bifunctional protein GlmU (453 aa).

The tract at residues 1–226 (MAFSVVILAA…EIEVEGINNR (226 aa)) is pyrophosphorylase. Residues 8 to 11 (LAAG), Lys22, Gln73, and 78 to 79 (GT) each bind UDP-N-acetyl-alpha-D-glucosamine. Asp102 serves as a coordination point for Mg(2+). 4 residues coordinate UDP-N-acetyl-alpha-D-glucosamine: Gly137, Glu151, Asn166, and Asn224. Residue Asn224 participates in Mg(2+) binding. Positions 227–247 (KQLAAIERAFQFEQAQELMMQ) are linker. The segment at 248–453 (GVSLLDPHRF…SGWQRPTKPE (206 aa)) is N-acetyltransferase. Residues Arg330 and Lys348 each coordinate UDP-N-acetyl-alpha-D-glucosamine. The active-site Proton acceptor is the His360. UDP-N-acetyl-alpha-D-glucosamine-binding residues include Tyr363 and Asn374. Residues Ala377, 383–384 (NY), Ser402, Ala420, and Arg437 each bind acetyl-CoA.

It in the N-terminal section; belongs to the N-acetylglucosamine-1-phosphate uridyltransferase family. The protein in the C-terminal section; belongs to the transferase hexapeptide repeat family. In terms of assembly, homotrimer. The cofactor is Mg(2+).

The protein resides in the cytoplasm. The enzyme catalyses alpha-D-glucosamine 1-phosphate + acetyl-CoA = N-acetyl-alpha-D-glucosamine 1-phosphate + CoA + H(+). It catalyses the reaction N-acetyl-alpha-D-glucosamine 1-phosphate + UTP + H(+) = UDP-N-acetyl-alpha-D-glucosamine + diphosphate. The protein operates within nucleotide-sugar biosynthesis; UDP-N-acetyl-alpha-D-glucosamine biosynthesis; N-acetyl-alpha-D-glucosamine 1-phosphate from alpha-D-glucosamine 6-phosphate (route II): step 2/2. It participates in nucleotide-sugar biosynthesis; UDP-N-acetyl-alpha-D-glucosamine biosynthesis; UDP-N-acetyl-alpha-D-glucosamine from N-acetyl-alpha-D-glucosamine 1-phosphate: step 1/1. It functions in the pathway bacterial outer membrane biogenesis; LPS lipid A biosynthesis. Its function is as follows. Catalyzes the last two sequential reactions in the de novo biosynthetic pathway for UDP-N-acetylglucosamine (UDP-GlcNAc). The C-terminal domain catalyzes the transfer of acetyl group from acetyl coenzyme A to glucosamine-1-phosphate (GlcN-1-P) to produce N-acetylglucosamine-1-phosphate (GlcNAc-1-P), which is converted into UDP-GlcNAc by the transfer of uridine 5-monophosphate (from uridine 5-triphosphate), a reaction catalyzed by the N-terminal domain. This Pseudoalteromonas atlantica (strain T6c / ATCC BAA-1087) protein is Bifunctional protein GlmU.